Consider the following 292-residue polypeptide: tRNA pseudouridine synthase B (292 aa).

The active-site Nucleophile is D38.

The protein belongs to the pseudouridine synthase TruB family. Type 1 subfamily.

The catalysed reaction is uridine(55) in tRNA = pseudouridine(55) in tRNA. Functionally, responsible for synthesis of pseudouridine from uracil-55 in the psi GC loop of transfer RNAs. This Streptococcus pneumoniae serotype 4 (strain ATCC BAA-334 / TIGR4) protein is tRNA pseudouridine synthase B.